A 360-amino-acid chain; its full sequence is N6-Methyl-AMP deaminase (360 aa).

Zn(2+) contacts are provided by histidine 23 and histidine 25. Residues histidine 25, asparagine 27, histidine 73, 105–108 (STPR), aspartate 147, and glycine 180 each bind N(6)-methyl-AMP. Histidine 207 lines the Zn(2+) pocket. N(6)-methyl-AMP is bound by residues glutamate 210, aspartate 292, and aspartate 293. The active-site Proton donor is the glutamate 210. Aspartate 292 is a binding site for Zn(2+).

Belongs to the metallo-dependent hydrolases superfamily. Adenosine and AMP deaminases family. In terms of assembly, monomer. The cofactor is Zn(2+).

The catalysed reaction is N(6)-methyl-AMP + H2O + H(+) = IMP + methylamine. Its function is as follows. Catalyzes the hydrolysis of the free cytosolic methylated adenosine nucleotide N(6)-methyl-AMP (N6-mAMP) to produce inositol monophosphate (IMP) and methylamine. Is required for the catabolism of cytosolic N6-mAMP, which is derived from the degradation of mRNA containing N6-methylated adenine (m6A). The protein is N6-Methyl-AMP deaminase (Mapda) of Mus musculus (Mouse).